The following is a 104-amino-acid chain: Naphthalene 1,2-dioxygenase/salicylate 5-hydroxylase systems, ferredoxin component (104 aa).

Residues 6–101 (IDAACLDDIP…VKIENMRVML (96 aa)) form the Rieske domain. Residues Cys-45, His-47, Cys-64, and His-67 each coordinate [2Fe-2S] cluster.

It belongs to the bacterial ring-hydroxylating dioxygenase ferredoxin component family. Ferredoxin NagAb belongs to both the salicylate 5-hydroxylase (S5H) and the naphthalene 1,2-dioxygenase (NDO) multicomponent enzyme systems. The NDO multicomponent enzyme system is composed of an electron transfer component and a dioxygenase component (iron sulfur protein (ISP)). The electron transfer component is composed of a ferredoxin reductase (NagAa) and a ferredoxin (NagAb), and the dioxygenase component is formed by a large alpha subunit (NagAc) and a small beta subunit (NagAd). The S5H multicomponent enzyme system is composed of an electron transfer component and a monooxygenase component. The electron transfer component is composed of a ferredoxin reductase (NagAa) and a ferredoxin (NagAb), and the monooxygenase component is formed by a large subunit (NagG) and a small subunit (NagH). It depends on [2Fe-2S] cluster as a cofactor.

The protein operates within aromatic compound metabolism; naphthalene degradation. Functionally, component of two multicomponent enzyme systems which are involved in the catabolism of naphthalene. Plays a role as an electron transfer component for both salicylate 5-hydroxylase (S5H) and naphthalene 1,2-dioxygenase (NDO) systems, by transferring electrons to the oxygenase components. This is Naphthalene 1,2-dioxygenase/salicylate 5-hydroxylase systems, ferredoxin component from Ralstonia sp.